Here is a 983-residue protein sequence, read N- to C-terminus: Anion exchange protein 4 (983 aa).

A disordered region spans residues 1 to 48 (MEMKLPGQEGFEASSAPRNIPSGELDSNPDPGTGPSPDGPSDTESKEL). A glycan (N-linked (GlcNAc...) asparagine) is linked at Asn-183. 2 disordered regions span residues 186–205 (TGTR…DNEE) and 332–357 (RIPP…RGPA). 4 helical membrane passes run 415–435 (AVLY…GLLG), 443–463 (GVLE…LMAG), 500–520 (VGIW…SVLV), and 530–550 (GFCA…MLNL). The segment at 415–983 (AVLYIYLATV…KAPEINISVN (569 aa)) is membrane (anion exchange). Asn-576 and Asn-600 each carry an N-linked (GlcNAc...) asparagine glycan. The next 7 membrane-spanning stretches (helical) occupy residues 624-644 (VPDI…FAMA), 665-685 (FSSV…GLAT), 712-732 (PWWW…LIFM), 758-778 (LFCV…WYVS), 815-835 (GLVV…LKFI), 837-857 (MPVL…SIQF), and 899-919 (LWII…LGLV). Over residues 946 to 957 (RSIPEKGLEPEH) the composition is skewed to basic and acidic residues. Residues 946–983 (RSIPEKGLEPEHSFSGSDSEDSELMYQPKAPEINISVN) form a disordered region. Residue Asn-979 is glycosylated (N-linked (GlcNAc...) asparagine).

Belongs to the anion exchanger (TC 2.A.31) family. As to expression, kidney specific.

Its subcellular location is the basolateral cell membrane. It catalyses the reaction 2 hydrogencarbonate(out) + chloride(in) + Na(+)(out) = 2 hydrogencarbonate(in) + chloride(out) + Na(+)(in). It carries out the reaction K(+)(in) + 2 hydrogencarbonate(in) + chloride(out) = K(+)(out) + 2 hydrogencarbonate(out) + chloride(in). The catalysed reaction is Li(+)(in) + 2 hydrogencarbonate(in) + chloride(out) = Li(+)(out) + 2 hydrogencarbonate(out) + chloride(in). The enzyme catalyses Rb(+)(in) + 2 hydrogencarbonate(in) + chloride(out) = Rb(+)(out) + 2 hydrogencarbonate(out) + chloride(in). It catalyses the reaction Cs(+)(in) + 2 hydrogencarbonate(in) + chloride(out) = Cs(+)(out) + 2 hydrogencarbonate(out) + chloride(in). Functionally, electroneutral Cl(-)/HCO3(-) antiporter that favors chloride ion entry and efflux of hydrogencarbonate and sodium ion across the basolateral membrane and may participate in salivary secretion. Also mediates Cl(-)/HCO3(-) exchange activity in the presence of K(+) as well as Cs(+), Li(+), and Rb(+). Does not contribute to Cl(-)/HCO3(-) exchanger in the apical membrane of the upper villous epithelium. The protein is Anion exchange protein 4 of Homo sapiens (Human).